Consider the following 390-residue polypeptide: uncharacterized protein (390 aa).

This is an uncharacterized protein from Orgyia pseudotsugata multicapsid polyhedrosis virus (OpMNPV).